Reading from the N-terminus, the 81-residue chain is Large ribosomal subunit protein bL31B (81 aa).

The protein belongs to the bacterial ribosomal protein bL31 family. Type B subfamily. As to quaternary structure, part of the 50S ribosomal subunit.

This Borreliella burgdorferi (strain ATCC 35210 / DSM 4680 / CIP 102532 / B31) (Borrelia burgdorferi) protein is Large ribosomal subunit protein bL31B.